The sequence spans 633 residues: Glutamyl-tRNA(Gln) amidotransferase subunit E (633 aa).

Belongs to the GatB/GatE family. GatE subfamily. Heterodimer of GatD and GatE.

It catalyses the reaction L-glutamyl-tRNA(Gln) + L-glutamine + ATP + H2O = L-glutaminyl-tRNA(Gln) + L-glutamate + ADP + phosphate + H(+). In terms of biological role, allows the formation of correctly charged Gln-tRNA(Gln) through the transamidation of misacylated Glu-tRNA(Gln) in organisms which lack glutaminyl-tRNA synthetase. The reaction takes place in the presence of glutamine and ATP through an activated gamma-phospho-Glu-tRNA(Gln). The GatDE system is specific for glutamate and does not act on aspartate. The protein is Glutamyl-tRNA(Gln) amidotransferase subunit E of Saccharolobus islandicus (strain L.S.2.15 / Lassen #1) (Sulfolobus islandicus).